Reading from the N-terminus, the 391-residue chain is uncharacterized protein (391 aa).

This is an uncharacterized protein from Sinorhizobium fredii (strain NBRC 101917 / NGR234).